The sequence spans 880 residues: MVTSDETVLATTTNKTSITTEPMEPKSSDESTDSETDKIKILKAEQREALTEATGSVEVNGNEENGHVECATVDEVAHVEEDKVEEATNSVVDLSSNGSSATTSVPVEEQEEKANEDETNDVVMETSENGENGKEENGTAMEVAENPAVTENGSKSDGETETDRVAIKDSQEDDSEPVNGSVKPEEKEEKNDTDAPMEEEDQNGKGVKRPVECIQLDDDDDDIQEVSPPVPAKKQKTEETKQEPKQEAKAEPADDNEQAQIRLLDKLQEYVGDQRGQPCNKTRKVLDTLLGAINAQVQKEPLSVRKLILDKVLVLPNTISFPPSQVCDLLIEHDPEMPLAKVINRMFGEERPKLSDSEKRERQQMKQHNPVSHMTKLLVDIGQDLVQETTYCDIVHAKNLPEIPKNIETYKQVAAQLKPVWETLKRKNEPYKLKMSRCGVCGFQTESKLAMAAHKETLHFTGSKFQCTLCKETDTNEQRMKEHYFEAHLIIAKSEEKESKYPCAICEEDFNFKGVREQHYKQCKKDYIRIRNIMMPKQEDHLYLNRWLWERPPVDPSIIQQQQAAALQQAEQKKRHQQALLREQHAQAQAAQLLRKQQLQQQQQAQRLREQQAQAQYRQMAQLIQQQQQQQNRNNANNMSNSLIQAMQAQLRRSGTGTSPQNLNLLQKQMAAVLKNQNPAQIQALVASMNKQTQSPKTPTTPKVAKAAATPTLPLAMSASSSSPGVSFQCEICDQTVHEKDKYLSHLQVLHKQMVGKTLQDMTQGAPLACSRCRDRFWTYEGLERHLVMSHGLVTADLLLKAQKKEDGGRCKTCGKQYAFNMLQHLVADHQVKLCSAEIMYSCDVCAFKCSSYQTLEAHLSSTHPKSADKKKEELITLDD.

The span at 1-20 shows a compositional bias: polar residues; sequence MVTSDETVLATTTNKTSITT. Disordered stretches follow at residues 1-37, 82-257, and 350-370; these read MVTS…SETD, DKVE…DDNE, and ERPK…QHNP. The segment covering 23–37 has biased composition (basic and acidic residues); the sequence is MEPKSSDESTDSETD. Polar residues predominate over residues 87-105; the sequence is ATNSVVDLSSNGSSATTSV. Acidic residues predominate over residues 108 to 120; the sequence is EEQEEKANEDETN. Basic and acidic residues-rich tracts occupy residues 154–170 and 183–193; these read SKSD…IKDS and KPEEKEEKNDT. The segment covering 215 to 224 has biased composition (acidic residues); sequence QLDDDDDDIQ. Basic and acidic residues-rich tracts occupy residues 235 to 252 and 350 to 364; these read QKTE…KAEP and ERPK…ERQQ. C2H2-type zinc fingers lie at residues 436 to 459 and 465 to 488; these read SRCG…ETLH and FQCT…FEAH. The CCHC-type zinc finger occupies 501–523; the sequence is YPCAICEEDFNFKGVREQHYKQC. 4 consecutive C2H2-type zinc fingers follow at residues 728-751, 768-791, 809-830, and 841-864; these read FQCE…QVLH, LACS…VMSH, GRCK…VADH, and YSCD…SSTH.

Interacts with hda-1, let-418, lin-1, mog-1, mog-4, mog-5, mog-6, pie-1 and unc-98.

Its subcellular location is the nucleus. In terms of biological role, has a broad role in development, specifically in the genetic pathway SynMuvB that negatively regulates specification of the vulval cell fate. Required for fem-3 3'-UTR-mediated repression in the regulation of the sperm/oocyte switch. Acts by regulating the translation of fem-3 mRNA, by binding to its 3'-UTR. The protein is MOG interacting and ectopic P-granules protein 1 of Caenorhabditis briggsae.